The chain runs to 589 residues: Protein OS-9 homolog (589 aa).

A signal peptide spans 1–21 (MFSILNKLGIIWLALANISNC). 3 N-linked (GlcNAc...) asparagine glycosylation sites follow: asparagine 17, asparagine 61, and asparagine 90. An MRH domain is found at 130 to 288 (KDCVFAYGSN…VIGVPKLCSL (159 aa)). An intrachain disulfide couples cysteine 132 to cysteine 148. Positions 143, 155, 241, 247, 270, and 276 each coordinate a mannooligosaccharide derivative. 2 disulfides stabilise this stretch: cysteine 240–cysteine 274 and cysteine 255–cysteine 286. An N-linked (GlcNAc...) asparagine glycan is attached at asparagine 426. A disordered region spans residues 497–520 (GKGSALDSTNNDKNNKATAENDKQ). The segment covering 509–519 (KNNKATAENDK) has biased composition (basic and acidic residues). Positions 586-589 (HDEL) match the Prevents secretion from ER motif.

The protein belongs to the OS-9 family. As to quaternary structure, interacts with missfolded ER lumenal proteins.

The protein localises to the endoplasmic reticulum membrane. Functionally, lectin involved in the quality control of the secretory pathway. As a member of the endoplasmic reticulum-associated degradation lumenal (ERAD-L) surveillance system, targets misfolded endoplasmic reticulum lumenal glycoproteins for degradation. This chain is Protein OS-9 homolog (YOS9), found in Debaryomyces hansenii (strain ATCC 36239 / CBS 767 / BCRC 21394 / JCM 1990 / NBRC 0083 / IGC 2968) (Yeast).